We begin with the raw amino-acid sequence, 1000 residues long: Putative methyl-accepting chemotaxis protein sll0041 (1000 aa).

The disordered stretch occupies residues 1 to 59; the sequence is MTQNPSSDRRPDTAQSVANGETLDGALFTGLTDTAAAQDESSETSASFATIDGEDKSEV. GAF domains lie at 342–478 and 509–650; these read EIQG…QTTL and NSEQ…GLAL. Residues 671–722 form the HAMP domain; sequence EKMQKRALELLMEVDPVSRGDLTIRAHVTEDEIGTIADSYNATIESLRRIVT. Residues 727–963 form the Methyl-accepting transducer domain; that stretch reads AASQFTETTD…SVTQTMALVA (237 aa).

Belongs to the methyl-accepting chemotaxis (MCP) protein family.

This Synechocystis sp. (strain ATCC 27184 / PCC 6803 / Kazusa) protein is Putative methyl-accepting chemotaxis protein sll0041.